The sequence spans 80 residues: Teretoxin Tan6.1 (80 aa).

Positions 1-21 (MATSGRLLCLCLVLGLVFESL) are cleaved as a signal peptide. A propeptide spanning residues 22–34 (GHPGARLPKDGKR) is cleaved from the precursor.

Belongs to the teretoxin M (TM) superfamily. Post-translationally, contains 3 disulfide bonds. Expressed by the venom duct.

It is found in the secreted. The polypeptide is Teretoxin Tan6.1 (Terebra anilis (Auger snail)).